The sequence spans 147 residues: UPF0179 protein NP_3406A (147 aa).

It belongs to the UPF0179 family.

The protein is UPF0179 protein NP_3406A of Natronomonas pharaonis (strain ATCC 35678 / DSM 2160 / CIP 103997 / JCM 8858 / NBRC 14720 / NCIMB 2260 / Gabara) (Halobacterium pharaonis).